We begin with the raw amino-acid sequence, 368 residues long: Acetyl-coenzyme A carboxylase carboxyl transferase subunit alpha (368 aa).

One can recognise a CoA carboxyltransferase C-terminal domain in the interval 44–294; that stretch reads EIDNKLQEIY…RKSIEKNLNE (251 aa).

This sequence belongs to the AccA family. In terms of assembly, acetyl-CoA carboxylase is a heterohexamer composed of biotin carboxyl carrier protein (AccB), biotin carboxylase (AccC) and two subunits each of ACCase subunit alpha (AccA) and ACCase subunit beta (AccD).

Its subcellular location is the cytoplasm. The enzyme catalyses N(6)-carboxybiotinyl-L-lysyl-[protein] + acetyl-CoA = N(6)-biotinyl-L-lysyl-[protein] + malonyl-CoA. The protein operates within lipid metabolism; malonyl-CoA biosynthesis; malonyl-CoA from acetyl-CoA: step 1/1. Component of the acetyl coenzyme A carboxylase (ACC) complex. First, biotin carboxylase catalyzes the carboxylation of biotin on its carrier protein (BCCP) and then the CO(2) group is transferred by the carboxyltransferase to acetyl-CoA to form malonyl-CoA. This is Acetyl-coenzyme A carboxylase carboxyl transferase subunit alpha from Pelagibacter ubique (strain HTCC1062).